Consider the following 239-residue polypeptide: Nicotinamide riboside transporter PnuC (239 aa).

The Cytoplasmic segment spans residues 1-21; it reads MDFFSTHNILIHIPIGAGGYD. A helical transmembrane segment spans residues 22–42; the sequence is LSWIEAVGTIAGLLCIWLASL. The Periplasmic portion of the chain corresponds to 43 to 48; sequence EKISNY. The helical transmembrane segment at 49–68 threads the bilayer; it reads FFGLVNVTLFAIIFFQIQLY. The Cytoplasmic segment spans residues 69–71; it reads ASL. Residues 72-89 traverse the membrane as a helical segment; it reads LLQLFFFAANIYGWYAWS. The Periplasmic segment spans residues 90 to 109; sequence RQTKDNQAELKIRWLPLPKA. The chain crosses the membrane as a helical span at residues 110-127; that stretch reads MAWLAICVIAIGLMTRYI. The Cytoplasmic portion of the chain corresponds to 128 to 157; the sequence is DPVFAVLTRVAVAIMQMLGLQVTMPVLQPD. A helical transmembrane segment spans residues 158-177; it reads AFPFWDSCMMVLSIVAMILM. Residues 178 to 183 are Periplasmic-facing; it reads TRKYVE. The chain crosses the membrane as a helical span at residues 184–206; that stretch reads NWLLWVIINVISVVIFALQGVYA. Beta-nicotinamide D-riboside-binding residues include tryptophan 188 and asparagine 192. Residues 207–239 are Cytoplasmic-facing; the sequence is MSLEYLILTFIAVNGSRLWINSARERGSRALSR.

It belongs to the nicotinamide ribonucleoside (NR) uptake permease (TC 4.B.1) family.

The protein resides in the cell inner membrane. Required for nicotinamide riboside transport across the inner membrane. The sequence is that of Nicotinamide riboside transporter PnuC (pnuC) from Salmonella typhimurium (strain LT2 / SGSC1412 / ATCC 700720).